Consider the following 316-residue polypeptide: Transaldolase (316 aa).

The active-site Schiff-base intermediate with substrate is K126.

Belongs to the transaldolase family. Type 1 subfamily. Homodimer.

The protein localises to the cytoplasm. It catalyses the reaction D-sedoheptulose 7-phosphate + D-glyceraldehyde 3-phosphate = D-erythrose 4-phosphate + beta-D-fructose 6-phosphate. It participates in carbohydrate degradation; pentose phosphate pathway; D-glyceraldehyde 3-phosphate and beta-D-fructose 6-phosphate from D-ribose 5-phosphate and D-xylulose 5-phosphate (non-oxidative stage): step 2/3. Transaldolase is important for the balance of metabolites in the pentose-phosphate pathway. The chain is Transaldolase from Methylibium petroleiphilum (strain ATCC BAA-1232 / LMG 22953 / PM1).